The sequence spans 740 residues: NAD(P)H-quinone oxidoreductase subunit 5, chloroplastic (740 aa).

16 helical membrane-spanning segments follow: residues 9–29 (WIIPFIPLPVPILLGGGLLLF), 40–60 (WSFLSIFLLSIVMIFSLYLSI), 89–109 (IDPLTCIMLILITTVGILVLI), 125–145 (FAYMGFFNTSMLGLVTSSNLI), 147–167 (IYFFWELVGMCSYLLIGFWFT), 185–205 (GDFGLLLGILGLYWVTGSFEF), 221–241 (VNLLFLTLCAFLLFMGPIAKS), 258–278 (TPISALIHAATMVAAGIFLVA), 283–303 (LFIVIPSIMYIISLIGIITIL), 327–347 (LGYMMLALGMGSYRSALFHLI), 354–374 (ALLFLGSGSIIHSMEAIVGYS), 396–416 (TAFLLGTLSLCGIPPLACFWS), 425–445 (LLFSPIFAIIACSTAGLTAFY), 547–567 (ILFPMLVLLLFTLFIGAIGIP), 606–626 (FSVSIAFFGIFIAYCLYKPFY), and 718–738 (ISSYLFLYLSYVFLFFLFLKI).

This sequence belongs to the complex I subunit 5 family. NDH is composed of at least 16 different subunits, 5 of which are encoded in the nucleus.

The protein localises to the plastid. The protein resides in the chloroplast thylakoid membrane. It carries out the reaction a plastoquinone + NADH + (n+1) H(+)(in) = a plastoquinol + NAD(+) + n H(+)(out). The catalysed reaction is a plastoquinone + NADPH + (n+1) H(+)(in) = a plastoquinol + NADP(+) + n H(+)(out). Functionally, NDH shuttles electrons from NAD(P)H:plastoquinone, via FMN and iron-sulfur (Fe-S) centers, to quinones in the photosynthetic chain and possibly in a chloroplast respiratory chain. The immediate electron acceptor for the enzyme in this species is believed to be plastoquinone. Couples the redox reaction to proton translocation, and thus conserves the redox energy in a proton gradient. The sequence is that of NAD(P)H-quinone oxidoreductase subunit 5, chloroplastic (ndhF) from Aethionema cordifolium (Lebanon stonecress).